The primary structure comprises 413 residues: Multidrug resistance protein MdtA (413 aa).

Positions 1–20 (MKGSNTFRWAIAIGVVVAAA) are cleaved as a signal peptide. Disordered regions lie at residues 31–57 (SPTAAPGVAAQAPHTAAAGRRGMRDGP) and 391–413 (EPQTTMADEKSPSRHEGQKGARA). The span at 397-413 (ADEKSPSRHEGQKGARA) shows a compositional bias: basic and acidic residues.

The protein belongs to the membrane fusion protein (MFP) (TC 8.A.1) family. As to quaternary structure, part of a tripartite efflux system composed of MdtA, MdtB and MdtC.

It is found in the cell inner membrane. This chain is Multidrug resistance protein MdtA, found in Salmonella paratyphi C (strain RKS4594).